The chain runs to 406 residues: Tryptophan synthase beta chain (406 aa).

N6-(pyridoxal phosphate)lysine is present on lysine 95.

This sequence belongs to the TrpB family. In terms of assembly, tetramer of two alpha and two beta chains. It depends on pyridoxal 5'-phosphate as a cofactor.

It carries out the reaction (1S,2R)-1-C-(indol-3-yl)glycerol 3-phosphate + L-serine = D-glyceraldehyde 3-phosphate + L-tryptophan + H2O. It participates in amino-acid biosynthesis; L-tryptophan biosynthesis; L-tryptophan from chorismate: step 5/5. In terms of biological role, the beta subunit is responsible for the synthesis of L-tryptophan from indole and L-serine. The sequence is that of Tryptophan synthase beta chain from Azotobacter vinelandii (strain DJ / ATCC BAA-1303).